Here is a 79-residue protein sequence, read N- to C-terminus: MAKAPVRKPKKKVCVFCKDKAAQSIDYKDTTLLRKYISDRGKIRARRVTGNCSQHQRDVAIAVKNAREMALLPYTSTAR.

This sequence belongs to the bacterial ribosomal protein bS18 family. In terms of assembly, part of the 30S ribosomal subunit. Forms a tight heterodimer with protein bS6.

Binds as a heterodimer with protein bS6 to the central domain of the 16S rRNA, where it helps stabilize the platform of the 30S subunit. The polypeptide is Small ribosomal subunit protein bS18B (Saccharopolyspora erythraea (strain ATCC 11635 / DSM 40517 / JCM 4748 / NBRC 13426 / NCIMB 8594 / NRRL 2338)).